A 226-amino-acid polypeptide reads, in one-letter code: Clarin-3 (226 aa).

Residues 8 to 28 (LMFLSGFLTSLGSVVVICSIL) form a helical membrane-spanning segment. N-linked (GlcNAc...) asparagine glycosylation is present at Asn46. 3 helical membrane-spanning segments follow: residues 92–112 (VVIL…VFTF), 128–148 (GVYT…VLFV), and 181–201 (FWLT…IIFY).

This sequence belongs to the clarin family.

The protein resides in the membrane. The chain is Clarin-3 (Clrn3) from Mus musculus (Mouse).